A 68-amino-acid chain; its full sequence is Conotoxin reg3.14 (68 aa).

An N-terminal signal peptide occupies residues 1-22 (MMSKLGVLLTICLLLFPLSVLP). A propeptide spanning residues 23 to 52 (LDGDQPADQPAERMQDISAEQNPWFDPVKR) is cleaved from the precursor. Disulfide bonds link Cys53–Cys68, Cys54–Cys64, and Cys59–Cys67.

The protein belongs to the conotoxin M superfamily. As to expression, expressed by the venom duct.

The protein resides in the secreted. This chain is Conotoxin reg3.14, found in Conus regius (Crown cone).